The sequence spans 90 residues: MKFNIIIVFISLAILVHSSYAANDNDDDPTTTVHPTTTEQPDDKFECPSRFGYFADPKDPHKFYICSNWEAVHKDCPGNTRWNEDEETCT.

A signal peptide spans 1 to 21 (MKFNIIIVFISLAILVHSSYA). Residues 22 to 42 (ANDNDDDPTTTVHPTTTEQPD) are disordered. A compositionally biased stretch (low complexity) spans 30 to 39 (TTTVHPTTTE). The Chitin-binding type-2 domain occupies 44-90 (KFECPSRFGYFADPKDPHKFYICSNWEAVHKDCPGNTRWNEDEETCT). Cystine bridges form between cysteine 47–cysteine 66 and cysteine 76–cysteine 89. Residues 52 to 90 (GYFADPKDPHKFYICSNWEAVHKDCPGNTRWNEDEETCT) are important for IgE-binding.

In terms of assembly, monomer. Expressed in epithelial cells of the midgut.

Its subcellular location is the secreted. It localises to the endoplasmic reticulum. The protein localises to the cytoplasmic vesicle. Its function is as follows. Does not bind chitin in vitro. The protein is Major mite allergen Der p 23 of Dermatophagoides pteronyssinus (European house dust mite).